The chain runs to 427 residues: UPF0597 protein CPF_0803 (427 aa).

It belongs to the UPF0597 family.

In Clostridium perfringens (strain ATCC 13124 / DSM 756 / JCM 1290 / NCIMB 6125 / NCTC 8237 / Type A), this protein is UPF0597 protein CPF_0803.